The following is a 523-amino-acid chain: Probable E3 ubiquitin-protein ligase ZFP1 (523 aa).

The span at 18-28 (EQGHSHIHSES) shows a compositional bias: basic and acidic residues. The interval 18-43 (EQGHSHIHSESFNRTGNDSSDQGAQH) is disordered. Over residues 29–40 (FNRTGNDSSDQG) the composition is skewed to polar residues. An RING-type; atypical zinc finger spans residues 471-512 (CIICQEEYQVKECIGTLDCGHRYHEDCIKQWLMVKNLCPICK).

Belongs to the RING-type zinc finger family. Interacts with DJA6.

It catalyses the reaction S-ubiquitinyl-[E2 ubiquitin-conjugating enzyme]-L-cysteine + [acceptor protein]-L-lysine = [E2 ubiquitin-conjugating enzyme]-L-cysteine + N(6)-ubiquitinyl-[acceptor protein]-L-lysine.. It functions in the pathway protein modification; protein ubiquitination. Its function is as follows. Probable E3 ubiquitin-protein ligase. The polypeptide is Probable E3 ubiquitin-protein ligase ZFP1 (Oryza sativa subsp. japonica (Rice)).